Consider the following 298-residue polypeptide: tRNA pseudouridine synthase B (298 aa).

The active-site Nucleophile is the Asp44.

It belongs to the pseudouridine synthase TruB family. Type 1 subfamily.

It catalyses the reaction uridine(55) in tRNA = pseudouridine(55) in tRNA. In terms of biological role, responsible for synthesis of pseudouridine from uracil-55 in the psi GC loop of transfer RNAs. This Mycobacteroides abscessus (strain ATCC 19977 / DSM 44196 / CCUG 20993 / CIP 104536 / JCM 13569 / NCTC 13031 / TMC 1543 / L948) (Mycobacterium abscessus) protein is tRNA pseudouridine synthase B.